Consider the following 90-residue polypeptide: UPF0237 protein NMA1909 (90 aa).

An ACT domain is found at 5 to 83 (VITVIGKDRV…LDIRMQNEEI (79 aa)).

The protein belongs to the UPF0237 family.

This chain is UPF0237 protein NMA1909, found in Neisseria meningitidis serogroup A / serotype 4A (strain DSM 15465 / Z2491).